The chain runs to 335 residues: UPF0353 protein MT1528 (335 aa).

The next 2 membrane-spanning stretches (helical) occupy residues 18-38 and 67-87; these read WFFL…LMQL and VPAI…AGPT. Residues 98 to 294 form the VWFA domain; sequence VVMLVIDVSQ…AELRAVYSSL (197 aa). The helical transmembrane segment at 309–329 threads the bilayer; that stretch reads VGWLRLGALALALAALAALLI.

The protein belongs to the UPF0353 family.

Its subcellular location is the cell membrane. This is UPF0353 protein MT1528 from Mycobacterium tuberculosis (strain CDC 1551 / Oshkosh).